Reading from the N-terminus, the 965-residue chain is Calsyntenin-2 (965 aa).

Residues 1–20 form the signal peptide; it reads MLPGRLCLVPLLLALGVGSG. Topologically, residues 21-835 are extracellular; sequence GGSGDGGDSR…SIQRSSVVPS (815 aa). Cadherin domains are found at residues 46-162 and 163-282; these read IETS…APTF and KEPA…MPLF. Residues N58 and N100 are each glycosylated (N-linked (GlcNAc...) asparagine). 4 N-linked (GlcNAc...) asparagine glycosylation sites follow: N344, N376, N720, and N733. A helical transmembrane segment spans residues 836-856; that stretch reads IATVVIIISVCMLVFVVAMGV. Topologically, residues 857–965 are cytoplasmic; it reads YRVRIAHQHF…NTAGVINIWK (109 aa). The tract at residues 891–965 is disordered; sequence PMEKHEGPGH…NTAGVINIWK (75 aa). The span at 892 to 902 shows a compositional bias: basic and acidic residues; that stretch reads MEKHEGPGHGE. Positions 903–915 are enriched in acidic residues; the sequence is DETEGEEEEEAEE. The span at 942–959 shows a compositional bias: polar residues; sequence QSGTSSQRPERSTWNTAG.

The protein belongs to the calsyntenin family. Proteolytically processed under normal cellular conditions. A primary zeta-cleavage generates a large extracellular (soluble) N-terminal domain (sAlc) and a short C-terminal transmembrane fragment (CTF1). A secondary cleavage catalyzed by gamma-secretase within the transmembrane domain releases the beta-Alc-gamma chain in the extracellular milieu and produces an intracellular fragment (AlcICD). This processing is strongly suppressed in the tripartite complex formed with APBA2 and APP, which seems to prevent the association with PSEN1.

The protein localises to the postsynaptic cell membrane. It localises to the endoplasmic reticulum membrane. The protein resides in the golgi apparatus membrane. It is found in the cell projection. Its subcellular location is the dendrite. In terms of biological role, postsynaptic adhesion molecule that binds to presynaptic neurexins to mediate synapse formation, and which is involved in learning and memory. Promotes synapse development by acting as a cell adhesion molecule at the postsynaptic membrane, which associates with neurexin-alpha at the presynaptic membrane. This is Calsyntenin-2 from Rattus norvegicus (Rat).